Here is a 67-residue protein sequence, read N- to C-terminus: LPS-assembly lipoprotein LptM (67 aa).

The first 19 residues, 1–19 (MKNVFKALTVLLTLFSLTG), serve as a signal peptide directing secretion. Residue C20 is the site of N-palmitoyl cysteine attachment. C20 carries S-diacylglycerol cysteine lipidation. The segment at 26–67 (LYFPPADKNAPPPTKPVETQTQSTVPDKNDRATGDGPSQVNY) is disordered. Residues 42 to 51 (VETQTQSTVP) are compositionally biased toward polar residues.

It belongs to the LptM family. In terms of assembly, interacts with the outer membrane embedded portion of the LPS translocon formed by LptD and LptE (LptDE).

It localises to the cell outer membrane. In terms of biological role, component of the lipopolysaccharide (LPS) transport (Lpt) pathway that promotes efficient assembly of the outer membrane LPS translocon (LptDE) by the BAM complex. Facilitates oxidative maturation of LptD by stabilizing a conformation of the LPS translocon in which LptD can efficiently acquire native disulfide bonds, thereby activating the LPS translocon. The sequence is that of LPS-assembly lipoprotein LptM from Escherichia coli O157:H7.